Here is a 294-residue protein sequence, read N- to C-terminus: tRNA dimethylallyltransferase (294 aa).

10–17 (GPTAVGKT) provides a ligand contact to ATP. 12–17 (TAVGKT) provides a ligand contact to substrate. The segment at 35 to 38 (DSQQ) is interaction with substrate tRNA.

Belongs to the IPP transferase family. In terms of assembly, monomer. Mg(2+) is required as a cofactor.

It catalyses the reaction adenosine(37) in tRNA + dimethylallyl diphosphate = N(6)-dimethylallyladenosine(37) in tRNA + diphosphate. Its function is as follows. Catalyzes the transfer of a dimethylallyl group onto the adenine at position 37 in tRNAs that read codons beginning with uridine, leading to the formation of N6-(dimethylallyl)adenosine (i(6)A). This is tRNA dimethylallyltransferase from Streptococcus suis (strain 05ZYH33).